The primary structure comprises 932 residues: Glycine dehydrogenase (decarboxylating) (932 aa).

Lys-685 is subject to N6-(pyridoxal phosphate)lysine.

Belongs to the GcvP family. The glycine cleavage system is composed of four proteins: P, T, L and H. Pyridoxal 5'-phosphate serves as cofactor.

The catalysed reaction is N(6)-[(R)-lipoyl]-L-lysyl-[glycine-cleavage complex H protein] + glycine + H(+) = N(6)-[(R)-S(8)-aminomethyldihydrolipoyl]-L-lysyl-[glycine-cleavage complex H protein] + CO2. In terms of biological role, the glycine cleavage system catalyzes the degradation of glycine. The P protein binds the alpha-amino group of glycine through its pyridoxal phosphate cofactor; CO(2) is released and the remaining methylamine moiety is then transferred to the lipoamide cofactor of the H protein. This Brucella abortus (strain S19) protein is Glycine dehydrogenase (decarboxylating).